Reading from the N-terminus, the 1040-residue chain is Multidrug resistance protein MdtB (1040 aa).

Helical transmembrane passes span 16-36 (FIMRPVATTLLMVAILLAGII), 342-362 (DTQFELMLAIALVVMIIYLFL), 369-389 (IIPGVAVPLSLVGTFAVMVFL), 396-416 (LTLMALTIATGFVVDDAIVVI), 440-460 (IGFTIISLTFSLIAVLIPLLF), 472-492 (FAVTLAVAILISAVVSLTLTP), 537-557 (WLTLGVALSTLALSIILWVFI), 863-883 (LGSTVWLVVAAVVAMYIVLGV), 888-908 (FIHPITILSTLPTAGVGALLA), 911-931 (LAGSELDVIAIIGIILLIGIV), 968-988 (ILMTTLAALLGALPLMLSTGV), and 998-1018 (IGMVGGLMLSQVLTLFTTPVI).

This sequence belongs to the resistance-nodulation-cell division (RND) (TC 2.A.6) family. MdtB subfamily. As to quaternary structure, part of a tripartite efflux system composed of MdtA, MdtB and MdtC. MdtB forms a heteromultimer with MdtC.

It is found in the cell inner membrane. The polypeptide is Multidrug resistance protein MdtB (Klebsiella pneumoniae (strain 342)).